A 362-amino-acid polypeptide reads, in one-letter code: Peptide chain release factor 1 (362 aa).

The residue at position 237 (glutamine 237) is an N5-methylglutamine.

Belongs to the prokaryotic/mitochondrial release factor family. Methylated by PrmC. Methylation increases the termination efficiency of RF1.

It is found in the cytoplasm. Functionally, peptide chain release factor 1 directs the termination of translation in response to the peptide chain termination codons UAG and UAA. The sequence is that of Peptide chain release factor 1 from Aliivibrio salmonicida (strain LFI1238) (Vibrio salmonicida (strain LFI1238)).